A 279-amino-acid chain; its full sequence is Lyso-glycine lipid O-acyltransferase (279 aa).

This sequence belongs to the O-acyltransferase GlsA family.

The catalysed reaction is a lyso-glycine lipid + a fatty acyl-[ACP] = a glycine lipid + holo-[ACP]. It catalyses the reaction N-[(3R)-3-hydroxyhexadecanoyl]-glycine + hexadecanoyl-[ACP] = N-[(3R)-3-(hexadecanoyloxy)hexadecanoyl]-glycine + holo-[ACP]. The protein operates within lipid metabolism. Functionally, is involved in the production of glycine lipids (GL), which are phosphorus-free membrane lipids. Catalyzes the second step of GL biosynthesis, i.e. the O-acylation of the hydroxyl group of lyso-glycine lipids, resulting in the production of the mature diacylated glycine lipids. In Phocaeicola vulgatus (strain ATCC 8482 / DSM 1447 / JCM 5826 / CCUG 4940 / NBRC 14291 / NCTC 11154) (Bacteroides vulgatus), this protein is Lyso-glycine lipid O-acyltransferase.